Consider the following 1119-residue polypeptide: Ubiquitin-associated protein 2 (1119 aa).

The disordered stretch occupies residues Met-1–Gln-26. Residues Asp-8–Pro-17 show a composition bias toward basic and acidic residues. The UBA domain maps to Lys-48 to Gly-92. The stretch at Lys-105–Arg-130 forms a coiled coil. Residues Ala-110–Arg-130 show a composition bias toward basic and acidic residues. Disordered stretches follow at residues Ala-110–Ser-202, Leu-385–Thr-476, Val-622–Gln-736, Arg-853–Ala-905, Ser-937–Gly-966, Gly-982–Tyr-1020, and His-1082–Asn-1119. Arg-166 is subject to Omega-N-methylarginine. The segment covering Lys-168–Gly-182 has biased composition (basic residues). The span at Thr-389 to Ser-407 shows a compositional bias: low complexity. A phosphoserine mark is found at Ser-432, Ser-439, Ser-473, and Ser-630. Over residues Leu-435–Gln-447 the composition is skewed to low complexity. The span at Ser-651–Gly-662 shows a compositional bias: polar residues. Positions Pro-663–Ser-678 are enriched in low complexity. Positions Cys-679–Thr-694 are enriched in polar residues. Composition is skewed to low complexity over residues Ser-695–Gln-736 and Ser-874–Pro-900. Positions Val-943–Gly-957 are enriched in polar residues. 2 stretches are compositionally biased toward low complexity: residues Gly-1002–Gly-1011 and Gln-1088–Pro-1102.

As to quaternary structure, may interact with ANXA2.

It localises to the nucleus. The protein resides in the chromosome. It is found in the cytoplasm. In terms of biological role, recruits the ubiquitination machinery to RNA polymerase II for polyubiquitination, removal and degradation, when the transcription-coupled nucleotide excision repair (TC-NER) machinery fails to resolve DNA damage. May promote the degradation of ANXA2. This chain is Ubiquitin-associated protein 2, found in Homo sapiens (Human).